We begin with the raw amino-acid sequence, 121 residues long: Large ribosomal subunit protein bL12 (121 aa).

Belongs to the bacterial ribosomal protein bL12 family. As to quaternary structure, homodimer. Part of the ribosomal stalk of the 50S ribosomal subunit. Forms a multimeric L10(L12)X complex, where L10 forms an elongated spine to which 2 to 4 L12 dimers bind in a sequential fashion. Binds GTP-bound translation factors.

In terms of biological role, forms part of the ribosomal stalk which helps the ribosome interact with GTP-bound translation factors. Is thus essential for accurate translation. The chain is Large ribosomal subunit protein bL12 from Xanthomonas axonopodis pv. citri (strain 306).